A 1208-amino-acid chain; its full sequence is Chromosome partition protein Smc (1208 aa).

ATP is bound at residue 32 to 39; the sequence is PNGCGKSN. Coiled coils occupy residues 170–205, 239–504, and 694–1054; these read VTKY…GERI, EARA…ARVQ, and VIER…QLQD.

It belongs to the SMC family. In terms of assembly, homodimer.

It is found in the cytoplasm. Its function is as follows. Required for chromosome condensation and partitioning. This Thauera aminoaromatica protein is Chromosome partition protein Smc.